We begin with the raw amino-acid sequence, 359 residues long: Prostaglandin D2 receptor (359 aa).

Residues 1–21 (MKSPFYRCQNTTSVEKGNSAV) lie on the Extracellular side of the membrane. N-linked (GlcNAc...) asparagine glycosylation is present at Asn10. A helical membrane pass occupies residues 22 to 42 (MGGVLFSTGLLGNLLALGLLA). Over 43–59 (RSGLGWCSRRPLRPLPS) the chain is Cytoplasmic. Residues 60-80 (VFYMLVCGLTVTDLLGKCLLS) form a helical membrane-spanning segment. The Extracellular portion of the chain corresponds to 81–107 (PVVLAAYAQNRSLRVLAPALDNSLCQA). N-linked (GlcNAc...) asparagine glycosylation is present at Asn90. A disulfide bond links Cys105 and Cys183. The chain crosses the membrane as a helical span at residues 108–128 (FAFFMSFFGLSSTLQLLAMAL). Topologically, residues 129–150 (ECWLSLGHPFFYRRHITLRLGA) are cytoplasmic. The chain crosses the membrane as a helical span at residues 151 to 171 (LVAPVVSAFSLAFCALPFMGF). Over 172–195 (GKFVQYCPGTWCFIQMVHEEGSLS) the chain is Extracellular. Residues 196–216 (VLGYSVLYSSLMALLVLATVL) form a helical membrane-spanning segment. The Cytoplasmic portion of the chain corresponds to 217-262 (CNLGAMRNLYAMHRRLQRHPRSCTRDCAEPRADGREASPQPLEELD). A helical transmembrane segment spans residues 263-283 (HLLLLALMTVLFTMCSLPVIY). The Extracellular portion of the chain corresponds to 284 to 310 (RAYYGAFKDVKEKNRTSEEAEDLRALR). The N-linked (GlcNAc...) asparagine glycan is linked to Asn297. A helical transmembrane segment spans residues 311–331 (FLSVISIVDPWIFIIFRSPVF). Residues 332–359 (RIFFHKIFIRPLRYRSRCSNSTNMESSL) lie on the Cytoplasmic side of the membrane.

This sequence belongs to the G-protein coupled receptor 1 family. As to expression, expressed in retinal choroid, ciliary epithelium, longitudinal and circular ciliary muscles, iris, small intestine and platelet membranes.

The protein resides in the cell membrane. Functionally, receptor for prostaglandin D2 (PGD2). The activity of this receptor is mainly mediated by G(s) proteins that stimulate adenylate cyclase, resulting in an elevation of intracellular cAMP. A mobilization of calcium is also observed, but without formation of inositol 1,4,5-trisphosphate. Involved in PLA2G3-dependent maturation of mast cells. PLA2G3 is secreted by immature mast cells and acts on nearby fibroblasts upstream to PTDGS to synthesize PGD2, which in turn promotes mast cell maturation and degranulation via PTGDR. The polypeptide is Prostaglandin D2 receptor (PTGDR) (Homo sapiens (Human)).